The chain runs to 309 residues: Clotting factor G beta subunit (309 aa).

The signal sequence occupies residues 1–31 (MDISFLVFITLSMALFSSNVTGTSVTSRVRR). Intrachain disulfides connect Cys38–Cys158, Cys74–Cys90, Cys205–Cys227, and Cys238–Cys268. The Peptidase S1 domain maps to 47–292 (IIGGGIATPH…YVNWLQEITF (246 aa)). His89 (charge relay system) is an active-site residue. The N-linked (GlcNAc...) asparagine glycan is linked to Asn100. Asp138 functions as the Charge relay system in the catalytic mechanism. Asn206 carries an N-linked (GlcNAc...) asparagine glycan. The Charge relay system role is filled by Ser242.

Belongs to the peptidase S1 family. Clotting factor G is a heterodimer composed of two non-covalently associated subunits, alpha and beta. Upon activation, converted to a two-chain active form linked by a disulfide bond. Forms a covalent heterodimer with intracellular coagulation inhibitor 3/LICI-3. Expressed in the hemocytes (at protein level).

The enzyme catalyses Selective cleavage of 98-Arg-|-Ile-99 bond in Limulus proclotting enzyme to form active clotting enzyme.. Its activity is regulated as follows. Binding to (1-&gt;3)-beta-D-glucan to alpha subunit, induces autocatalysis and activation of beta subunit. Inhibited by intracellular coagulation inhibitor 3/LICI-3 and to a lesser extend by intracellular coagulation inhibitor 2/LICI-2. Component of the heterodimer clotting factor G which may play a role in defense mechanisms against fungi. Initiates a (1-&gt;3)-beta-glucan-sensing clotting pathway whereby the alpha subunit binds to glucans containing (1-&gt;3)-beta linkages, which are components of the fungal cell wall, and the beta subunit catalyzes the activation of proclotting enzyme. The sequence is that of Clotting factor G beta subunit from Tachypleus tridentatus (Japanese horseshoe crab).